We begin with the raw amino-acid sequence, 235 residues long: NADH-quinone oxidoreductase subunit C (235 aa).

Belongs to the complex I 30 kDa subunit family. As to quaternary structure, NDH-1 is composed of 14 different subunits. Subunits NuoB, C, D, E, F, and G constitute the peripheral sector of the complex.

The protein localises to the cell membrane. The catalysed reaction is a quinone + NADH + 5 H(+)(in) = a quinol + NAD(+) + 4 H(+)(out). NDH-1 shuttles electrons from NADH, via FMN and iron-sulfur (Fe-S) centers, to quinones in the respiratory chain. The immediate electron acceptor for the enzyme in this species is believed to be a menaquinone. Couples the redox reaction to proton translocation (for every two electrons transferred, four hydrogen ions are translocated across the cytoplasmic membrane), and thus conserves the redox energy in a proton gradient. The chain is NADH-quinone oxidoreductase subunit C from Mycobacterium avium (strain 104).